The following is a 153-amino-acid chain: 6,7-dimethyl-8-ribityllumazine synthase (153 aa).

Residues phenylalanine 22, 56 to 58 (AFE), and 80 to 82 (AVI) each bind 5-amino-6-(D-ribitylamino)uracil. (2S)-2-hydroxy-3-oxobutyl phosphate is bound at residue 85–86 (AT). The active-site Proton donor is histidine 88. Phenylalanine 113 is a 5-amino-6-(D-ribitylamino)uracil binding site. Position 127 (arginine 127) interacts with (2S)-2-hydroxy-3-oxobutyl phosphate.

This sequence belongs to the DMRL synthase family.

It carries out the reaction (2S)-2-hydroxy-3-oxobutyl phosphate + 5-amino-6-(D-ribitylamino)uracil = 6,7-dimethyl-8-(1-D-ribityl)lumazine + phosphate + 2 H2O + H(+). Its pathway is cofactor biosynthesis; riboflavin biosynthesis; riboflavin from 2-hydroxy-3-oxobutyl phosphate and 5-amino-6-(D-ribitylamino)uracil: step 1/2. In terms of biological role, catalyzes the formation of 6,7-dimethyl-8-ribityllumazine by condensation of 5-amino-6-(D-ribitylamino)uracil with 3,4-dihydroxy-2-butanone 4-phosphate. This is the penultimate step in the biosynthesis of riboflavin. This chain is 6,7-dimethyl-8-ribityllumazine synthase, found in Clostridium tetani (strain Massachusetts / E88).